We begin with the raw amino-acid sequence, 338 residues long: Porphobilinogen deaminase (338 aa).

Cys265 bears the S-(dipyrrolylmethanemethyl)cysteine mark.

Belongs to the HMBS family. The cofactor is dipyrromethane.

The catalysed reaction is 4 porphobilinogen + H2O = hydroxymethylbilane + 4 NH4(+). Its pathway is porphyrin-containing compound metabolism; protoporphyrin-IX biosynthesis; coproporphyrinogen-III from 5-aminolevulinate: step 2/4. In terms of biological role, tetrapolymerization of the monopyrrole PBG into the hydroxymethylbilane pre-uroporphyrinogen in several discrete steps. The sequence is that of Porphobilinogen deaminase (HEM3) from Yarrowia lipolytica (strain CLIB 122 / E 150) (Yeast).